A 157-amino-acid polypeptide reads, in one-letter code: SsrA-binding protein (157 aa).

It belongs to the SmpB family.

It is found in the cytoplasm. Its function is as follows. Required for rescue of stalled ribosomes mediated by trans-translation. Binds to transfer-messenger RNA (tmRNA), required for stable association of tmRNA with ribosomes. tmRNA and SmpB together mimic tRNA shape, replacing the anticodon stem-loop with SmpB. tmRNA is encoded by the ssrA gene; the 2 termini fold to resemble tRNA(Ala) and it encodes a 'tag peptide', a short internal open reading frame. During trans-translation Ala-aminoacylated tmRNA acts like a tRNA, entering the A-site of stalled ribosomes, displacing the stalled mRNA. The ribosome then switches to translate the ORF on the tmRNA; the nascent peptide is terminated with the 'tag peptide' encoded by the tmRNA and targeted for degradation. The ribosome is freed to recommence translation, which seems to be the essential function of trans-translation. This is SsrA-binding protein from Christiangramia forsetii (strain DSM 17595 / CGMCC 1.15422 / KT0803) (Gramella forsetii).